The primary structure comprises 402 residues: 2,3-bisphosphoglycerate-independent phosphoglycerate mutase 2 (402 aa).

Belongs to the BPG-independent phosphoglycerate mutase family. A-PGAM subfamily.

It carries out the reaction (2R)-2-phosphoglycerate = (2R)-3-phosphoglycerate. Its pathway is carbohydrate degradation; glycolysis; pyruvate from D-glyceraldehyde 3-phosphate: step 3/5. In terms of biological role, catalyzes the interconversion of 2-phosphoglycerate and 3-phosphoglycerate. This chain is 2,3-bisphosphoglycerate-independent phosphoglycerate mutase 2 (apgM2), found in Methanothermobacter thermautotrophicus (strain ATCC 29096 / DSM 1053 / JCM 10044 / NBRC 100330 / Delta H) (Methanobacterium thermoautotrophicum).